Consider the following 453-residue polypeptide: Midnolin-A (453 aa).

The Ubiquitin-like domain maps to methionine 20–glycine 94. 4 disordered regions span residues serine 184–valine 219, cysteine 232–lysine 256, arginine 333–alanine 376, and glutamine 390–leucine 429. Residues histidine 206–valine 219 are compositionally biased toward polar residues. Low complexity-rich tracts occupy residues serine 239–serine 252 and threonine 338–proline 351. The segment covering serine 365–alanine 376 has biased composition (basic and acidic residues). Over residues glutamine 390–arginine 399 the composition is skewed to basic residues. Residues arginine 415–serine 428 show a composition bias toward low complexity.

The protein localises to the nucleus. Its subcellular location is the cytoplasm. The protein resides in the cytosol. It localises to the nucleolus. Facilitates ubiquitin-independent proteasomal degradation of polycomb protein CBX4. Plays a role in inhibiting the activity of glucokinase GCK and both glucose-induced and basal insulin secretion. The chain is Midnolin-A (midn-a) from Xenopus laevis (African clawed frog).